The sequence spans 398 residues: Succinyl-diaminopimelate desuccinylase (398 aa).

A Zn(2+)-binding site is contributed by histidine 68. The active site involves aspartate 70. Aspartate 101 provides a ligand contact to Zn(2+). The active-site Proton acceptor is the glutamate 135. Glutamate 136, glutamate 164, and histidine 349 together coordinate Zn(2+).

The protein belongs to the peptidase M20A family. DapE subfamily. Homodimer. Zn(2+) serves as cofactor. It depends on Co(2+) as a cofactor.

The catalysed reaction is N-succinyl-(2S,6S)-2,6-diaminopimelate + H2O = (2S,6S)-2,6-diaminopimelate + succinate. It participates in amino-acid biosynthesis; L-lysine biosynthesis via DAP pathway; LL-2,6-diaminopimelate from (S)-tetrahydrodipicolinate (succinylase route): step 3/3. Functionally, catalyzes the hydrolysis of N-succinyl-L,L-diaminopimelic acid (SDAP), forming succinate and LL-2,6-diaminopimelate (DAP), an intermediate involved in the bacterial biosynthesis of lysine and meso-diaminopimelic acid, an essential component of bacterial cell walls. The chain is Succinyl-diaminopimelate desuccinylase from Wolbachia pipientis wMel.